The chain runs to 390 residues: 8-amino-7-oxononanoate synthase (390 aa).

Arg-19 contacts substrate. 106 to 107 provides a ligand contact to pyridoxal 5'-phosphate; it reads GY. His-131 contributes to the substrate binding site. Residues Ser-176, His-204, and Thr-233 each coordinate pyridoxal 5'-phosphate. An N6-(pyridoxal phosphate)lysine modification is found at Lys-236. Thr-350 lines the substrate pocket.

Belongs to the class-II pyridoxal-phosphate-dependent aminotransferase family. BioF subfamily. In terms of assembly, homodimer. Requires pyridoxal 5'-phosphate as cofactor.

The catalysed reaction is 6-carboxyhexanoyl-[ACP] + L-alanine + H(+) = (8S)-8-amino-7-oxononanoate + holo-[ACP] + CO2. The protein operates within cofactor biosynthesis; biotin biosynthesis. Functionally, catalyzes the decarboxylative condensation of pimeloyl-[acyl-carrier protein] and L-alanine to produce 8-amino-7-oxononanoate (AON), [acyl-carrier protein], and carbon dioxide. This is 8-amino-7-oxononanoate synthase from Pseudomonas putida (strain ATCC 47054 / DSM 6125 / CFBP 8728 / NCIMB 11950 / KT2440).